Consider the following 443-residue polypeptide: Threonine/serine transporter TdcC (443 aa).

The next 11 helical transmembrane spans lie at 22–42 (TTWTLGLFGTAIGAGVLFFPI), 44–64 (AGFGGLIPILVMLVLAYPIAF), 97–117 (GVVITFLYFFAICPLLWIYGV), 135–155 (ALNRGFVALFLLLLMAVIIWF), 163–183 (VMSFLVWPFIASLVLISLSLI), 207–227 (ILVTVWLGISIMVFSFNFSPI), 259–279 (ASILMVAVVMFFAFSCLFALS), 319–339 (ASIIALVAIFKSFFGHYLGTL), 366–386 (LSMVFIMGSTWLVAYVNPNIL), 389–409 (IEAMGAPIIASLLCLLPMYAI), and 422–442 (IDNVFVTAIGLLTISNIVYKV).

Belongs to the amino acid/polyamine transporter 2 family. SdaC/TdcC subfamily.

The protein resides in the cell inner membrane. It catalyses the reaction L-threonine(in) + H(+)(in) = L-threonine(out) + H(+)(out). The enzyme catalyses L-serine(in) + H(+)(in) = L-serine(out) + H(+)(out). Involved in the import of threonine and serine into the cell, with the concomitant import of a proton (symport system). The polypeptide is Threonine/serine transporter TdcC (Escherichia fergusonii (strain ATCC 35469 / DSM 13698 / CCUG 18766 / IAM 14443 / JCM 21226 / LMG 7866 / NBRC 102419 / NCTC 12128 / CDC 0568-73)).